The sequence spans 494 residues: tRNA-2-methylthio-N(6)-dimethylallyladenosine synthase (494 aa).

The 117-residue stretch at 4-120 (RSYQVRTFGC…LPVLLERARH (117 aa)) folds into the MTTase N-terminal domain. Residues Cys13, Cys49, Cys83, Cys157, Cys161, and Cys164 each coordinate [4Fe-4S] cluster. The Radical SAM core domain maps to 143 to 374 (RASHHSAWVS…SLQDEMSWAE (232 aa)). The TRAM domain maps to 376–449 (RAQVGRRVEI…PHHLTADGPL (74 aa)). Residues 465 to 494 (RAIAGDTPRPDRPAVSLGMPQLRPSAPAAR) are disordered.

Belongs to the methylthiotransferase family. MiaB subfamily. In terms of assembly, monomer. It depends on [4Fe-4S] cluster as a cofactor.

It is found in the cytoplasm. It catalyses the reaction N(6)-dimethylallyladenosine(37) in tRNA + (sulfur carrier)-SH + AH2 + 2 S-adenosyl-L-methionine = 2-methylsulfanyl-N(6)-dimethylallyladenosine(37) in tRNA + (sulfur carrier)-H + 5'-deoxyadenosine + L-methionine + A + S-adenosyl-L-homocysteine + 2 H(+). Functionally, catalyzes the methylthiolation of N6-(dimethylallyl)adenosine (i(6)A), leading to the formation of 2-methylthio-N6-(dimethylallyl)adenosine (ms(2)i(6)A) at position 37 in tRNAs that read codons beginning with uridine. The protein is tRNA-2-methylthio-N(6)-dimethylallyladenosine synthase of Parafrankia sp. (strain EAN1pec).